A 640-amino-acid polypeptide reads, in one-letter code: SH3 domain-containing protein 21 (640 aa).

Residues 1–60 are disordered; that stretch reads MVQSELQLQPRAGGRAEAASWGDRGNDKGGLGNPDMPSVSPGPQRPPKLSSLAYDSPPDY. One can recognise an SH3 domain in the interval 65-126; the sequence is SHPEVYRVLF…PDNFVLPPPP (62 aa). Disordered regions lie at residues 133–361, 401–551, and 618–640; these read RKVV…PLGD, YFVA…PDSQ, and VQVMQGTQKSQTPRVIHTQTQTY. Residues 177-186 are compositionally biased toward basic and acidic residues; that stretch reads PSRDSQKLTS. Positions 210-220 are enriched in polar residues; the sequence is TQTPQQRSVSS. 3 stretches are compositionally biased toward basic and acidic residues: residues 401–416, 459–469, and 494–532; these read YFVAKEDPSSQEEAHT, ALEKPHPHEEA, and RPLREEVLPKEGVASKEEVTLKEELPPKEEVAPKEEVPP. The stretch at 572 to 626 forms a coiled coil; it reads VDVTSLRGEVESLRRALELMEVQLERKLTDIWEELKSEKEQRRRLEVQVMQGTQK. A compositionally biased stretch (polar residues) spans 621–640; the sequence is MQGTQKSQTPRVIHTQTQTY.

This chain is SH3 domain-containing protein 21 (SH3D21), found in Homo sapiens (Human).